The following is a 523-amino-acid chain: Peptide chain release factor 3 (523 aa).

The 268-residue stretch at 10–277 (KKRRTFAIIS…SFVDLAPAPE (268 aa)) folds into the tr-type G domain. GTP-binding positions include 19–26 (SHPDAGKT), 87–91 (DTPGH), and 141–144 (NKLD).

It belongs to the TRAFAC class translation factor GTPase superfamily. Classic translation factor GTPase family. PrfC subfamily.

The protein resides in the cytoplasm. Functionally, increases the formation of ribosomal termination complexes and stimulates activities of RF-1 and RF-2. It binds guanine nucleotides and has strong preference for UGA stop codons. It may interact directly with the ribosome. The stimulation of RF-1 and RF-2 is significantly reduced by GTP and GDP, but not by GMP. This chain is Peptide chain release factor 3, found in Lactobacillus helveticus (strain DPC 4571).